The following is a 396-amino-acid chain: MIQTKDIIELTDTYGANNYHPLPIVISKAEGVWVEDPEGNRYMDLLSAYSAVNQGHRHPKIINALIDQANRVTLTSRAFHSDQLGPWYEKVAKLTNKEMVLPMNTGAEAVETAIKTARRWAYDVKKVEANRAEIIVCEDNFHGRTMGAVSMSSNEEYKRGFGPMLPGIIVIPYGDLEALKAAITPNTAAFILEPIQGEAGINIPPAGFLKEALEVCKKENVLFVADEIQTGLGRTGKVFACDWDNVTPDMYILGKALGGGVFPISCAAANRDILGVFEPGSHGSTFGGNPLACAVSIAALEVLEEEKLTERSLQLGEKLVGQLKEIDNPMITEVRGKGLFIGIELNEPARPYCEQLKAAGLLCKETHENVIRIAPPLVISEEDLEWAFQKIKAVLS.

An N6-(pyridoxal phosphate)lysine modification is found at Lys255.

Belongs to the class-III pyridoxal-phosphate-dependent aminotransferase family. OAT subfamily. The cofactor is pyridoxal 5'-phosphate.

Its subcellular location is the cytoplasm. The enzyme catalyses a 2-oxocarboxylate + L-ornithine = L-glutamate 5-semialdehyde + an L-alpha-amino acid. It functions in the pathway amino-acid biosynthesis; L-proline biosynthesis; L-glutamate 5-semialdehyde from L-ornithine: step 1/1. Catalyzes the interconversion of ornithine to glutamate semialdehyde. This chain is Ornithine aminotransferase, found in Bacillus anthracis (strain A0248).